The sequence spans 260 residues: Ribosomal RNA small subunit methyltransferase G (260 aa).

Residues glycine 94, phenylalanine 99, 117-119 (DST), 145-146 (AE), and arginine 164 each bind S-adenosyl-L-methionine. Positions 236–260 (APTPPPYPRSPGTPKRQPLGQSNRP) are disordered. Residues 237-246 (PTPPPYPRSP) show a composition bias toward pro residues.

This sequence belongs to the methyltransferase superfamily. RNA methyltransferase RsmG family.

It localises to the cytoplasm. Functionally, specifically methylates the N7 position of a guanine in 16S rRNA. This is Ribosomal RNA small subunit methyltransferase G from Synechococcus sp. (strain JA-2-3B'a(2-13)) (Cyanobacteria bacterium Yellowstone B-Prime).